Reading from the N-terminus, the 265-residue chain is GTP cyclohydrolase FolE2 (265 aa).

This sequence belongs to the GTP cyclohydrolase IV family.

It catalyses the reaction GTP + H2O = 7,8-dihydroneopterin 3'-triphosphate + formate + H(+). It functions in the pathway cofactor biosynthesis; 7,8-dihydroneopterin triphosphate biosynthesis; 7,8-dihydroneopterin triphosphate from GTP: step 1/1. Converts GTP to 7,8-dihydroneopterin triphosphate. The protein is GTP cyclohydrolase FolE2 of Bordetella bronchiseptica (strain ATCC BAA-588 / NCTC 13252 / RB50) (Alcaligenes bronchisepticus).